A 241-amino-acid chain; its full sequence is Ribonuclease PH (241 aa).

Phosphate is bound by residues Arg-89 and 127–129; that span reads GTR.

Belongs to the RNase PH family. As to quaternary structure, homohexameric ring arranged as a trimer of dimers.

It catalyses the reaction tRNA(n+1) + phosphate = tRNA(n) + a ribonucleoside 5'-diphosphate. Phosphorolytic 3'-5' exoribonuclease that plays an important role in tRNA 3'-end maturation. Removes nucleotide residues following the 3'-CCA terminus of tRNAs; can also add nucleotides to the ends of RNA molecules by using nucleoside diphosphates as substrates, but this may not be physiologically important. Probably plays a role in initiation of 16S rRNA degradation (leading to ribosome degradation) during starvation. In Xylella fastidiosa (strain M23), this protein is Ribonuclease PH.